The primary structure comprises 267 residues: Indole-3-glycerol phosphate synthase (267 aa).

It belongs to the TrpC family.

It carries out the reaction 1-(2-carboxyphenylamino)-1-deoxy-D-ribulose 5-phosphate + H(+) = (1S,2R)-1-C-(indol-3-yl)glycerol 3-phosphate + CO2 + H2O. It functions in the pathway amino-acid biosynthesis; L-tryptophan biosynthesis; L-tryptophan from chorismate: step 4/5. This chain is Indole-3-glycerol phosphate synthase, found in Ralstonia pickettii (strain 12J).